Here is a 436-residue protein sequence, read N- to C-terminus: Acetyl-CoA decarbonylase/synthase complex subunit delta (436 aa).

It belongs to the CdhD family. As to quaternary structure, heterodimer of delta and gamma chains. The ACDS complex is made up of alpha, epsilon, beta, gamma and delta chains with a probable stoichiometry of (alpha(2)epsilon(2))(4)-beta(8)-(gamma(1)delta(1))(8).

It participates in one-carbon metabolism; methanogenesis from acetate. Functionally, part of a complex that catalyzes the reversible cleavage of acetyl-CoA, allowing growth on acetate as sole source of carbon and energy. Probably maintains the overall quaternary structure of the ACDS complex. The polypeptide is Acetyl-CoA decarbonylase/synthase complex subunit delta (Methanosarcina mazei (strain ATCC BAA-159 / DSM 3647 / Goe1 / Go1 / JCM 11833 / OCM 88) (Methanosarcina frisia)).